Reading from the N-terminus, the 33-residue chain is Cysteine-rich venom protein tripurin (33 aa).

This sequence belongs to the CRISP family. Post-translationally, contains 8 disulfide bonds. In terms of tissue distribution, expressed by the venom gland.

The protein resides in the secreted. Functionally, blocks contraction of smooth muscle elicited by high potassium-induced depolarization, but does not block caffeine-stimulated contraction. May target voltage-gated calcium channels on smooth muscle. The chain is Cysteine-rich venom protein tripurin from Trimeresurus purpureomaculatus (Mangrove pit viper).